We begin with the raw amino-acid sequence, 870 residues long: A-kinase anchor protein 2 (870 aa).

2 disordered regions span residues Pro14–Glu43 and Ile103–Asp165. At Ser122 the chain carries Phosphoserine. A compositionally biased stretch (polar residues) spans Gly133–Ala151. At Ser152 the chain carries Phosphoserine. Low complexity predominate over residues Ser152 to Cys161. Lys174 participates in a covalent cross-link: Glycyl lysine isopeptide (Lys-Gly) (interchain with G-Cter in SUMO1); alternate. A Glycyl lysine isopeptide (Lys-Gly) (interchain with G-Cter in SUMO2); alternate cross-link involves residue Lys174. A coiled-coil region spans residues Glu213–Leu307. Positions Lys233–Lys324 are disordered. The span at Leu259–Gln274 shows a compositional bias: basic and acidic residues. A compositionally biased stretch (low complexity) spans Gln275–Leu302. Basic and acidic residues predominate over residues Ala313 to Lys324. The residue at position 347 (Ser347) is a Phosphoserine. A disordered region spans residues Glu409–Gly436. Residues Ser410–Gly424 are compositionally biased toward low complexity. Residues Ser472, Ser476, and Ser528 each carry the phosphoserine modification. The span at Phe506–Pro543 shows a compositional bias: polar residues. Disordered regions lie at residues Phe506–Glu577 and Gln595–Gly688. Thr537 is subject to Phosphothreonine. Residues Leu576–Gln589 are PKA-RII subunit binding domain. Residues Gln595–Ser608 show a composition bias toward basic and acidic residues. Ser641 carries the post-translational modification Phosphoserine. The span at Gln644–Gly665 shows a compositional bias: basic and acidic residues. Positions Lys720 to Ser755 form a coiled coil. 4 positions are modified to phosphoserine: Ser730, Ser758, Ser789, and Ser796. The segment at Gln740–Asn814 is disordered. Residues Ser755 to Tyr774 show a composition bias toward polar residues.

The protein localises to the apical cell membrane. Its function is as follows. Binds to regulatory subunit (RII) of protein kinase A. May be involved in establishing polarity in signaling systems or in integrating PKA-RII isoforms with downstream effectors to capture, amplify and focus diffuse, trans-cellular signals carried by cAMP. Binds to and modulates the structure of the actin cytoskeleton. This is A-kinase anchor protein 2 from Rattus norvegicus (Rat).